The chain runs to 692 residues: ABC transporter F family member 5 (692 aa).

Residues 64-95 (EIESLFSKQPSQQDSDRKRNGKSSKNGASGIS) form a disordered region. Polar residues predominate over residues 86–95 (SSKNGASGIS). ABC transporter domains are found at residues 98–356 (VKLE…ETQN) and 425–640 (VNVK…TKEL). Residues 130-137 (GVNGAGKT) and 457-464 (GPNGCGKS) each bind ATP. Residues 644–692 (AELEEKAPKVKAKSKMSKAEKEARKKQKMQAFQQAKQKSKASKNSKRWN) form a disordered region. A compositionally biased stretch (basic residues) spans 680-692 (QKSKASKNSKRWN).

This sequence belongs to the ABC transporter superfamily. ABCF family. EF3 (TC 3.A.1.121) subfamily.

This chain is ABC transporter F family member 5 (ABCF5), found in Arabidopsis thaliana (Mouse-ear cress).